The chain runs to 59 residues: Large ribosomal subunit protein uL30 (59 aa).

It belongs to the universal ribosomal protein uL30 family. Part of the 50S ribosomal subunit.

In Geotalea uraniireducens (strain Rf4) (Geobacter uraniireducens), this protein is Large ribosomal subunit protein uL30.